The chain runs to 209 residues: Imidazole glycerol phosphate synthase subunit HisH (209 aa).

Residues 5-209 (AIAIIDYDMG…LRNFVALVKD (205 aa)) enclose the Glutamine amidotransferase type-1 domain. Residue Cys83 is the Nucleophile of the active site. Catalysis depends on residues His188 and Glu190.

Heterodimer of HisH and HisF.

The protein localises to the cytoplasm. The catalysed reaction is 5-[(5-phospho-1-deoxy-D-ribulos-1-ylimino)methylamino]-1-(5-phospho-beta-D-ribosyl)imidazole-4-carboxamide + L-glutamine = D-erythro-1-(imidazol-4-yl)glycerol 3-phosphate + 5-amino-1-(5-phospho-beta-D-ribosyl)imidazole-4-carboxamide + L-glutamate + H(+). The enzyme catalyses L-glutamine + H2O = L-glutamate + NH4(+). Its pathway is amino-acid biosynthesis; L-histidine biosynthesis; L-histidine from 5-phospho-alpha-D-ribose 1-diphosphate: step 5/9. Functionally, IGPS catalyzes the conversion of PRFAR and glutamine to IGP, AICAR and glutamate. The HisH subunit catalyzes the hydrolysis of glutamine to glutamate and ammonia as part of the synthesis of IGP and AICAR. The resulting ammonia molecule is channeled to the active site of HisF. This chain is Imidazole glycerol phosphate synthase subunit HisH, found in Thermosynechococcus vestitus (strain NIES-2133 / IAM M-273 / BP-1).